Reading from the N-terminus, the 618-residue chain is Dihydroxy-acid dehydratase (618 aa).

Asp-81 lines the Mg(2+) pocket. Residue Cys-122 coordinates [2Fe-2S] cluster. Residues Asp-123 and Lys-124 each contribute to the Mg(2+) site. Lys-124 is subject to N6-carboxylysine. Cys-195 lines the [2Fe-2S] cluster pocket. Glu-492 contributes to the Mg(2+) binding site. The active-site Proton acceptor is Ser-518.

Belongs to the IlvD/Edd family. As to quaternary structure, homodimer. Requires [2Fe-2S] cluster as cofactor. Mg(2+) is required as a cofactor.

It catalyses the reaction (2R)-2,3-dihydroxy-3-methylbutanoate = 3-methyl-2-oxobutanoate + H2O. The catalysed reaction is (2R,3R)-2,3-dihydroxy-3-methylpentanoate = (S)-3-methyl-2-oxopentanoate + H2O. The protein operates within amino-acid biosynthesis; L-isoleucine biosynthesis; L-isoleucine from 2-oxobutanoate: step 3/4. It functions in the pathway amino-acid biosynthesis; L-valine biosynthesis; L-valine from pyruvate: step 3/4. Functions in the biosynthesis of branched-chain amino acids. Catalyzes the dehydration of (2R,3R)-2,3-dihydroxy-3-methylpentanoate (2,3-dihydroxy-3-methylvalerate) into 2-oxo-3-methylpentanoate (2-oxo-3-methylvalerate) and of (2R)-2,3-dihydroxy-3-methylbutanoate (2,3-dihydroxyisovalerate) into 2-oxo-3-methylbutanoate (2-oxoisovalerate), the penultimate precursor to L-isoleucine and L-valine, respectively. The polypeptide is Dihydroxy-acid dehydratase (Zymomonas mobilis subsp. mobilis (strain ATCC 31821 / ZM4 / CP4)).